The sequence spans 350 residues: tRNA uridine(34) hydroxylase (350 aa).

Residues 146 to 240 enclose the Rhodanese domain; sequence DDPDALFIDM…YARKAREQGL (95 aa). Cys200 (cysteine persulfide intermediate) is an active-site residue.

It belongs to the TrhO family.

It carries out the reaction uridine(34) in tRNA + AH2 + O2 = 5-hydroxyuridine(34) in tRNA + A + H2O. Functionally, catalyzes oxygen-dependent 5-hydroxyuridine (ho5U) modification at position 34 in tRNAs, the first step in 5-carboxymethoxyuridine (cmo5U) biosynthesis. May be part of an alternate pathway, which is able to bypass cmo5U biogenesis in a subset of tRNAs under aerobic conditions. This chain is tRNA uridine(34) hydroxylase, found in Escherichia coli (strain SMS-3-5 / SECEC).